Reading from the N-terminus, the 344-residue chain is Anthranilate phosphoribosyltransferase (344 aa).

Residues Gly-80, 83–84, Thr-88, 90–93, 108–116, and Ser-120 contribute to the 5-phospho-alpha-D-ribose 1-diphosphate site; these read GD, NVST, and KHGNRSVSS. Gly-80 contacts anthranilate. Ser-92 contributes to the Mg(2+) binding site. Asn-111 is a binding site for anthranilate. An anthranilate-binding site is contributed by Arg-166. Residues Asp-225 and Glu-226 each coordinate Mg(2+).

Belongs to the anthranilate phosphoribosyltransferase family. In terms of assembly, homodimer. Mg(2+) serves as cofactor.

It carries out the reaction N-(5-phospho-beta-D-ribosyl)anthranilate + diphosphate = 5-phospho-alpha-D-ribose 1-diphosphate + anthranilate. Its pathway is amino-acid biosynthesis; L-tryptophan biosynthesis; L-tryptophan from chorismate: step 2/5. Catalyzes the transfer of the phosphoribosyl group of 5-phosphorylribose-1-pyrophosphate (PRPP) to anthranilate to yield N-(5'-phosphoribosyl)-anthranilate (PRA). In Legionella pneumophila (strain Paris), this protein is Anthranilate phosphoribosyltransferase.